The sequence spans 416 residues: MKSYLVGGAVRDALLGQPAGDCDWVVVGADPAHMKSLGFKPVGRDFPVFLHPKTGEEFALARTERKNGHGYRGFIVNADPTVTLEQDLQRRDFTINAIARDQTNSTLIDPYGGVNDLEQRVLRHISPAFAEDPLRVLRAARFMARLAPLGFSIAPETLAMMRQMVANGELNSLIPERIWKELSRSLAYTQPAAFLHTLRTVNALEVVLPELNALYGVPQHADYHPEIDTGLHQELVSDIAAKLAPGDMLIGFAALCHDLGKALTPRATWPHHPMHEQRGMAPTQQLSERLKVPRDYQQLALIACREHLNVHRLSKLHDHTVYELLQRCDAFRRPERIAQLAIVCEADYRGRYGHEDANYPQGQHLCRLHAAALAVNARDLNRQDLHGTQIGEALAQARIRAISSAGVYDGGTGTNF.

ATP-binding residues include Gly8 and Arg11. Residues Gly8 and Arg11 each contribute to the CTP site. Residues Asp21 and Asp23 each coordinate Mg(2+). Arg91, Arg138, and Arg141 together coordinate ATP. The CTP site is built by Arg91, Arg138, and Arg141. In terms of domain architecture, HD spans 229 to 331; that stretch reads TGLHQELVSD…YELLQRCDAF (103 aa).

The protein belongs to the tRNA nucleotidyltransferase/poly(A) polymerase family. Bacterial CCA-adding enzyme type 1 subfamily. In terms of assembly, monomer. Can also form homodimers and oligomers. Mg(2+) is required as a cofactor. It depends on Ni(2+) as a cofactor.

The enzyme catalyses a tRNA precursor + 2 CTP + ATP = a tRNA with a 3' CCA end + 3 diphosphate. The catalysed reaction is a tRNA with a 3' CCA end + 2 CTP + ATP = a tRNA with a 3' CCACCA end + 3 diphosphate. Functionally, catalyzes the addition and repair of the essential 3'-terminal CCA sequence in tRNAs without using a nucleic acid template. Adds these three nucleotides in the order of C, C, and A to the tRNA nucleotide-73, using CTP and ATP as substrates and producing inorganic pyrophosphate. tRNA 3'-terminal CCA addition is required both for tRNA processing and repair. Also involved in tRNA surveillance by mediating tandem CCA addition to generate a CCACCA at the 3' terminus of unstable tRNAs. While stable tRNAs receive only 3'-terminal CCA, unstable tRNAs are marked with CCACCA and rapidly degraded. The chain is Multifunctional CCA protein from Xylella fastidiosa (strain M12).